A 354-amino-acid polypeptide reads, in one-letter code: Ribosomal RNA large subunit methyltransferase M (354 aa).

Residues Ser-183, 216–219, Asp-235, Asp-255, and Asp-271 contribute to the S-adenosyl-L-methionine site; that span reads SPGG. The active-site Proton acceptor is Lys-300.

The protein belongs to the class I-like SAM-binding methyltransferase superfamily. RNA methyltransferase RlmE family. RlmM subfamily. Monomer.

The protein localises to the cytoplasm. The enzyme catalyses cytidine(2498) in 23S rRNA + S-adenosyl-L-methionine = 2'-O-methylcytidine(2498) in 23S rRNA + S-adenosyl-L-homocysteine + H(+). Catalyzes the 2'-O-methylation at nucleotide C2498 in 23S rRNA. The sequence is that of Ribosomal RNA large subunit methyltransferase M from Pseudomonas putida (strain ATCC 47054 / DSM 6125 / CFBP 8728 / NCIMB 11950 / KT2440).